Here is a 1527-residue protein sequence, read N- to C-terminus: ATP-binding cassette sub-family C member 3 (1527 aa).

At 1–32 (MDALCGSGELGSKFWDSNLSVHTENPDLTPCF) the chain is on the extracellular side. N-linked (GlcNAc...) asparagine glycosylation occurs at Asn-18. Residues 33–53 (QNSLLAWVPCIYLWVALPCYL) form a helical membrane-spanning segment. The Cytoplasmic portion of the chain corresponds to 54–73 (LYLRHHCRGYIILSHLSKLK). A helical transmembrane segment spans residues 74 to 94 (MVLGVLLWCVSWADLFYSFHG). The Extracellular segment spans residues 95 to 99 (LVHGR). Residues 100 to 120 (APAPVFFVTPLVVGVTMLLAT) form a helical membrane-spanning segment. Residues 121–132 (LLIQYERLQGVQ) lie on the Cytoplasmic side of the membrane. A helical membrane pass occupies residues 133–153 (SSGVLIIFWFLCVVCAIVPFR). Residues 154–171 (SKILLAKAEGEISDPFRF) lie on the Extracellular side of the membrane. A helical membrane pass occupies residues 172 to 192 (TTFYIHFALVLSALILACFRE). Over 193 to 302 (KPPFFSAKNV…RPRKPSFLKA (110 aa)) the chain is Cytoplasmic. A helical membrane pass occupies residues 303–323 (LLATFGSSFLISACFKLIQDL). The 284-residue stretch at 311–594 (FLISACFKLI…LPQLISNLTQ (284 aa)) folds into the ABC transmembrane type-1 1 domain. The Extracellular segment spans residues 324 to 349 (LSFINPQLLSILIRFISNPMAPSWWG). Residues 350 to 370 (FLVAGLMFLCSMMQSLILQHY) traverse the membrane as a helical segment. Residues 371 to 426 (YHYIFVTGVKFRTGIMGVIYRKALVITNSVKRASTVGEIVNLMSVDAQRFMDLAPF) are Cytoplasmic-facing. Residues 427 to 447 (LNLLWSAPLQIILAIYFLWQN) traverse the membrane as a helical segment. Topologically, residues 448–450 (LGP) are extracellular. Residues 451–471 (SVLAGVAFMVLLIPLNGAVAV) form a helical membrane-spanning segment. Residues 472–533 (KMRAFQVKQM…LLRTAAYLHT (62 aa)) are Cytoplasmic-facing. Residues 534–554 (TTTFTWMCSPFLVTLITLWVY) traverse the membrane as a helical segment. Residues 555–576 (VYVDPNNVLDAEKAFVSVSLFN) lie on the Extracellular side of the membrane. The chain crosses the membrane as a helical span at residues 577–597 (ILRLPLNMLPQLISNLTQASV). Topologically, residues 598-963 (SLKRIQQFLS…VELSVFWDYA (366 aa)) are cytoplasmic. In terms of domain architecture, ABC transporter 1 spans 629–851 (IHSGTFTWAQ…NGSFANFLCN (223 aa)). Residue 661–668 (GPVGCGKS) coordinates ATP. A phosphoserine mark is found at Ser-908 and Ser-911. The tract at residues 910-932 (LSSDGEGQGRPVPRRHLGPSEKV) is disordered. Residues 964 to 984 (KAVGLCTTLAICLLYVGQSAA) traverse the membrane as a helical segment. Residues 971–1252 (TLAICLLYVG…MIRMMSDLES (282 aa)) enclose the ABC transmembrane type-1 2 domain. Residues 985-1021 (AIGANVWLSAWTNDAMADSRQNNTSLRLGVYAALGIL) are Extracellular-facing. Residues Asn-1006 and Asn-1007 are each glycosylated (N-linked (GlcNAc...) asparagine). The helical transmembrane segment at 1022–1042 (QGFLVMLAAMAMAAGGIQAAR) threads the bilayer. Residues 1043–1085 (VLHQALLHNKIRSPQSFFDTTPSGRILNCFSKDIYVVDEVLAP) lie on the Cytoplasmic side of the membrane. A helical membrane pass occupies residues 1086–1106 (VILMLLNSFFNAISTLVVIMA). Position 1107 (Ser-1107) is a topological domain, extracellular. A helical transmembrane segment spans residues 1108–1128 (TPLFTVVILPLAVLYTLVQRF). The Cytoplasmic segment spans residues 1129 to 1199 (YAATSRQLKR…ISNRWLSIGV (71 aa)). A helical membrane pass occupies residues 1200-1220 (EFVGNCVVLFAALFAVIGRSS). Residues 1221–1222 (LN) are Extracellular-facing. Residues 1223-1243 (PGLVGLSVSYSLQVTFALNWM) form a helical membrane-spanning segment. The Cytoplasmic segment spans residues 1244 to 1527 (IRMMSDLESN…YGMARDAGLA (284 aa)). The region spanning 1291–1523 (FRNYSVRYRP…RGIFYGMARD (233 aa)) is the ABC transporter 2 domain. 1323 to 1330 (GRTGAGKS) provides a ligand contact to ATP.

Belongs to the ABC transporter superfamily. ABCC family. Conjugate transporter (TC 3.A.1.208) subfamily. Mainly expressed in the liver. Also expressed in small intestine, colon, prostate, testis, brain and at a lower level in the kidney. In testis, localized to peritubular myoid cells, Leydig cells, along the basal membrane of Sertoli cells and moderately in the adluminal compartment of the seminiferous tubules.

Its subcellular location is the basolateral cell membrane. The protein localises to the basal cell membrane. It carries out the reaction taurocholate(in) + ATP + H2O = taurocholate(out) + ADP + phosphate + H(+). The catalysed reaction is glycocholate(in) + ATP + H2O = glycocholate(out) + ADP + phosphate + H(+). The enzyme catalyses taurolithocholate 3-sulfate(in) + ATP + H2O = taurolithocholate 3-sulfate(out) + ADP + phosphate + H(+). It catalyses the reaction taurochenodeoxycholate 3-sulfate(in) + ATP + H2O = taurochenodeoxycholate 3-sulfate(out) + ADP + phosphate + H(+). It carries out the reaction an S-substituted glutathione(in) + ATP + H2O = an S-substituted glutathione(out) + ADP + phosphate + H(+). The catalysed reaction is ATP + H2O + xenobioticSide 1 = ADP + phosphate + xenobioticSide 2.. The enzyme catalyses 17beta-estradiol 17-O-(beta-D-glucuronate)(in) + ATP + H2O = 17beta-estradiol 17-O-(beta-D-glucuronate)(out) + ADP + phosphate + H(+). It catalyses the reaction dehydroepiandrosterone 3-sulfate(in) + ATP + H2O = dehydroepiandrosterone 3-sulfate(out) + ADP + phosphate + H(+). It carries out the reaction leukotriene C4(in) + ATP + H2O = leukotriene C4(out) + ADP + phosphate + H(+). The catalysed reaction is (4Z,15Z)-bilirubin IXalpha C8-beta-D-glucuronoside(in) + ATP + H2O = (4Z,15Z)-bilirubin IXalpha C8-beta-D-glucuronoside(out) + ADP + phosphate + H(+). The enzyme catalyses (4Z,15Z)-bilirubin IXalpha C8,C12-beta-D-bisglucuronoside(in) + ATP + H2O = (4Z,15Z)-bilirubin IXalpha C8,C12-beta-D-bisglucuronoside(out) + ADP + phosphate + H(+). In terms of biological role, ATP-dependent transporter of the ATP-binding cassette (ABC) family that binds and hydrolyzes ATP to enable active transport of various substrates including many drugs, toxicants and endogenous compound across cell membranes. Transports glucuronide conjugates such as bilirubin diglucuronide, estradiol-17-beta-o-glucuronide and GSH conjugates such as leukotriene C4 (LTC4). Transports also various bile salts (taurocholate, glycocholate, taurochenodeoxycholate-3-sulfate, taurolithocholate- 3-sulfate). Does not contribute substantially to bile salt physiology but provides an alternative route for the export of bile acids and glucuronides from cholestatic hepatocytes. May contribute to regulate the transport of organic compounds in testes across the blood-testis-barrier. Can confer resistance to various anticancer drugs, methotrexate, tenoposide and etoposide, by decreasing accumulation of these drugs in cells. The chain is ATP-binding cassette sub-family C member 3 from Homo sapiens (Human).